Here is a 214-residue protein sequence, read N- to C-terminus: MNSKISEIRKNYSLSSLDIGDIGDDPISFFQKWFEEAVLSEVLEVNAMTLATATKDGKPNARIVLLKEILEDSFVFYTNYESKKGRELEENPRACLVFFWSELERQVRIEGGVKKVSREESNVYFHSRPRGSQIGAVVSPQSYEIPNRKFLEERFEEFSKLYEGKEVDLPNHWGGYAVHPNRIEFWQGRSSRLHDRIVFEKDTDSSWKKFRVAP.

Substrate is bound by residues 9 to 12 (RKNY) and K67. FMN is bound by residues 62 to 67 (RIVLLK), 77 to 78 (YT), K83, K84, and Q106. Residues Y124, R128, and S132 each coordinate substrate. Residues 141–142 (QS) and W186 contribute to the FMN site. 192–194 (RLH) provides a ligand contact to substrate. Residue R196 participates in FMN binding.

This sequence belongs to the pyridoxamine 5'-phosphate oxidase family. Homodimer. FMN is required as a cofactor.

The enzyme catalyses pyridoxamine 5'-phosphate + O2 + H2O = pyridoxal 5'-phosphate + H2O2 + NH4(+). The catalysed reaction is pyridoxine 5'-phosphate + O2 = pyridoxal 5'-phosphate + H2O2. The protein operates within cofactor metabolism; pyridoxal 5'-phosphate salvage; pyridoxal 5'-phosphate from pyridoxamine 5'-phosphate: step 1/1. It participates in cofactor metabolism; pyridoxal 5'-phosphate salvage; pyridoxal 5'-phosphate from pyridoxine 5'-phosphate: step 1/1. Catalyzes the oxidation of either pyridoxine 5'-phosphate (PNP) or pyridoxamine 5'-phosphate (PMP) into pyridoxal 5'-phosphate (PLP). This is Pyridoxine/pyridoxamine 5'-phosphate oxidase from Leptospira borgpetersenii serovar Hardjo-bovis (strain JB197).